The following is a 401-amino-acid chain: Type 3 secretion system translocon protein SctE (401 aa).

A coiled-coil region spans residues 129–160; sequence IQRLHEQNMKKIEENQEKIKETEENAKQVKKS. 2 helical membrane passes run 166–186 and 225–245; these read IFGW…VASG and LGPI…VMTF. The stretch at 345-379 forms a coiled coil; it reads LALNKADMAALQSIIDRLKEELSHLSESHRQVMEL.

Belongs to the SctE/SipB/YopB family. As to quaternary structure, the core secretion machinery of the T3SS is composed of approximately 20 different proteins, including cytoplasmic components, a base, an export apparatus and a needle. This subunit is involved in the formation of a pore, called the translocon, in host membrane. Interacts with YopD/SctB. Together with YopD/SctB, forms a multimeric integral membrane complex with a mass of between 500 and 700 kDa.

It is found in the secreted. Its subcellular location is the host membrane. Its function is as follows. Component of the type III secretion system (T3SS), also called injectisome, which is used to inject bacterial effector proteins into eukaryotic host cells. YopB/SctE and YopD/SctB are inserted into the host membrane where they form a pore and allow the translocation of effector proteins into the cytosol of target cells. Is an essential virulence determinant. Required for YopE translocation. Essential for the establishment of Yersinia infections in a mouse model system, but not for the targeting of effector Yops. May modulate the host's immune response at a distance from the site of infection. This Yersinia enterocolitica protein is Type 3 secretion system translocon protein SctE.